Consider the following 197-residue polypeptide: Surfactant protein C (197 aa).

A propeptide spanning residues 1–23 (MDVGSKEVLMESPPDYSAAPRGR) is cleaved from the precursor. 2 S-palmitoyl cysteine lipidation sites follow: Cys28 and Cys29. The propeptide occupies 59-197 (HMSQKHTEMV…LCGEVPLYYI (139 aa)). Residues 94–197 (FSIGSTGLVV…LCGEVPLYYI (104 aa)) form the BRICHOS domain. 2 cysteine pairs are disulfide-bonded: Cys120–Cys148 and Cys121–Cys189.

It localises to the secreted. The protein localises to the extracellular space. Its subcellular location is the surface film. Pulmonary surfactant associated proteins promote alveolar stability by lowering the surface tension at the air-liquid interface in the peripheral air spaces. The chain is Surfactant protein C from Homo sapiens (Human).